A 127-amino-acid chain; its full sequence is Glycine cleavage system H protein (127 aa).

The 83-residue stretch at 22–104 (EVVIGITHFA…YEGAWMVKVE (83 aa)) folds into the Lipoyl-binding domain. Position 63 is an N6-lipoyllysine (K63).

It belongs to the GcvH family. The glycine cleavage system is composed of four proteins: P, T, L and H. The cofactor is (R)-lipoate.

Functionally, the glycine cleavage system catalyzes the degradation of glycine. The H protein shuttles the methylamine group of glycine from the P protein to the T protein. Is also involved in protein lipoylation via its role as an octanoyl/lipoyl carrier protein intermediate. The chain is Glycine cleavage system H protein from Bacillus cereus (strain B4264).